Reading from the N-terminus, the 499-residue chain is Replication factor C large subunit (499 aa).

50 to 57 (GPPGVGKT) serves as a coordination point for ATP. Residues 428–499 (EAERRVEAAE…QATLFDFLKK (72 aa)) are disordered. The span at 436-472 (AEEEETMEAGEPEEELEEVEEEELTEEELEEAEEEIE) shows a compositional bias: acidic residues. Positions 473–484 (TVGKKEKPEKEK) are enriched in basic and acidic residues.

Belongs to the activator 1 small subunits family. RfcL subfamily. As to quaternary structure, heteromultimer composed of small subunits (RfcS) and large subunits (RfcL).

Its function is as follows. Part of the RFC clamp loader complex which loads the PCNA sliding clamp onto DNA. This chain is Replication factor C large subunit, found in Thermococcus kodakarensis (strain ATCC BAA-918 / JCM 12380 / KOD1) (Pyrococcus kodakaraensis (strain KOD1)).